Here is a 177-residue protein sequence, read N- to C-terminus: ATP synthase subunit delta (177 aa).

The protein belongs to the ATPase delta chain family. In terms of assembly, F-type ATPases have 2 components, F(1) - the catalytic core - and F(0) - the membrane proton channel. F(1) has five subunits: alpha(3), beta(3), gamma(1), delta(1), epsilon(1). F(0) has three main subunits: a(1), b(2) and c(10-14). The alpha and beta chains form an alternating ring which encloses part of the gamma chain. F(1) is attached to F(0) by a central stalk formed by the gamma and epsilon chains, while a peripheral stalk is formed by the delta and b chains.

Its subcellular location is the cell inner membrane. F(1)F(0) ATP synthase produces ATP from ADP in the presence of a proton or sodium gradient. F-type ATPases consist of two structural domains, F(1) containing the extramembraneous catalytic core and F(0) containing the membrane proton channel, linked together by a central stalk and a peripheral stalk. During catalysis, ATP synthesis in the catalytic domain of F(1) is coupled via a rotary mechanism of the central stalk subunits to proton translocation. In terms of biological role, this protein is part of the stalk that links CF(0) to CF(1). It either transmits conformational changes from CF(0) to CF(1) or is implicated in proton conduction. In Shewanella loihica (strain ATCC BAA-1088 / PV-4), this protein is ATP synthase subunit delta.